A 110-amino-acid chain; its full sequence is Cytochrome c oxidase subunit 4B (110 aa).

The next 3 helical transmembrane spans lie at 29 to 49 (MIAFVLMILLTLIAFAAVGYE), 55 to 75 (FVVPFILLLAAVQVAFQLYYF), and 89 to 109 (FIYGGVAVMLLLVWAFTTVVW).

The protein belongs to the cytochrome c oxidase bacterial subunit 4 family.

Its subcellular location is the cell membrane. The enzyme catalyses 4 Fe(II)-[cytochrome c] + O2 + 8 H(+)(in) = 4 Fe(III)-[cytochrome c] + 2 H2O + 4 H(+)(out). The chain is Cytochrome c oxidase subunit 4B (caaD) from Bacillus sp. (strain PS3).